A 244-amino-acid chain; its full sequence is 1-(5-phosphoribosyl)-5-[(5-phosphoribosylamino)methylideneamino] imidazole-4-carboxamide isomerase (244 aa).

The Proton acceptor role is filled by aspartate 11. Aspartate 132 functions as the Proton donor in the catalytic mechanism.

The protein belongs to the HisA/HisF family.

Its subcellular location is the cytoplasm. The catalysed reaction is 1-(5-phospho-beta-D-ribosyl)-5-[(5-phospho-beta-D-ribosylamino)methylideneamino]imidazole-4-carboxamide = 5-[(5-phospho-1-deoxy-D-ribulos-1-ylimino)methylamino]-1-(5-phospho-beta-D-ribosyl)imidazole-4-carboxamide. The protein operates within amino-acid biosynthesis; L-histidine biosynthesis; L-histidine from 5-phospho-alpha-D-ribose 1-diphosphate: step 4/9. This chain is 1-(5-phosphoribosyl)-5-[(5-phosphoribosylamino)methylideneamino] imidazole-4-carboxamide isomerase, found in Sphingopyxis alaskensis (strain DSM 13593 / LMG 18877 / RB2256) (Sphingomonas alaskensis).